The chain runs to 195 residues: MYLINQNGWIEVICGSMFSGKSEELIRRVRRTQFAKQHAIVFKPCIDNRYSEEDVVSHNGLKVKAVPVSASKDIFEHITEEMDVIAIDEVQFFDGDIVEVVQVLANRGYRVIVAGLDQDFRGLPFGQVPQLMAIAEHVTKLQAVCSACGSPASRTQRLIDGEPAAFDDPIILVGASESYEPRCRHXHAVPTNKDK.

ATP is bound by residues 15 to 22 (GSMFSGKS) and 88 to 91 (DEVQ). Catalysis depends on Glu89, which acts as the Proton acceptor. The Zn(2+) site is built by Cys145, Cys148, Cys183, and Xaa186.

It belongs to the thymidine kinase family. As to quaternary structure, homotetramer.

The protein resides in the cytoplasm. It carries out the reaction thymidine + ATP = dTMP + ADP + H(+). The chain is Thymidine kinase from Bacillus cereus (strain ATCC 10987 / NRS 248).